The following is a 161-amino-acid chain: Dehydrin DHN3 (161 aa).

Residues 1–12 (MEHGHATNRVDE) show a composition bias toward basic and acidic residues. A disordered region spans residues 1-161 (MEHGHATNRV…KIKEKLPGQH (161 aa)). Positions 20–38 (HGVGTGMGAHGGVGTGAAA) are enriched in gly residues. Composition is skewed to low complexity over residues 93 to 107 (DQQQTGGTYGQHGHT) and 115 to 130 (HGATATGGTYGQQGHT). 2 consecutive repeat copies span residues 101–123 (YGQHGHTGMTGTGEHGATATGGT) and 124–144 (YGQQGHTGMTGTGAHGTDGTG). Positions 101-144 (YGQHGHTGMTGTGEHGATATGGTYGQQGHTGMTGTGAHGTDGTG) are 2 X approximate tandem repeats. Residues 131–142 (GMTGTGAHGTDG) are compositionally biased toward gly residues. Residues 143–161 (TGEKKGIMDKIKEKLPGQH) show a composition bias toward basic and acidic residues.

The protein belongs to the plant dehydrin family.

The sequence is that of Dehydrin DHN3 (DHN3) from Hordeum vulgare (Barley).